A 388-amino-acid chain; its full sequence is Succinate--CoA ligase [ADP-forming] subunit beta (388 aa).

The ATP-grasp domain occupies 9-244; it reads KEILRKFGVA…LDEEDPAEIE (236 aa). ATP contacts are provided by residues Lys-46, 53–55, Glu-99, Ala-102, and Glu-107; that span reads GRG. Mg(2+) contacts are provided by Asn-199 and Asp-213. Substrate is bound by residues Asn-264 and 321 to 323; that span reads GIM.

Belongs to the succinate/malate CoA ligase beta subunit family. As to quaternary structure, heterotetramer of two alpha and two beta subunits. The cofactor is Mg(2+).

It carries out the reaction succinate + ATP + CoA = succinyl-CoA + ADP + phosphate. The enzyme catalyses GTP + succinate + CoA = succinyl-CoA + GDP + phosphate. The protein operates within carbohydrate metabolism; tricarboxylic acid cycle; succinate from succinyl-CoA (ligase route): step 1/1. Functionally, succinyl-CoA synthetase functions in the citric acid cycle (TCA), coupling the hydrolysis of succinyl-CoA to the synthesis of either ATP or GTP and thus represents the only step of substrate-level phosphorylation in the TCA. The beta subunit provides nucleotide specificity of the enzyme and binds the substrate succinate, while the binding sites for coenzyme A and phosphate are found in the alpha subunit. The protein is Succinate--CoA ligase [ADP-forming] subunit beta of Burkholderia vietnamiensis (strain G4 / LMG 22486) (Burkholderia cepacia (strain R1808)).